A 154-amino-acid chain; its full sequence is 6,7-dimethyl-8-ribityllumazine synthase (154 aa).

5-amino-6-(D-ribitylamino)uracil-binding positions include Phe-22, 56–58, and 80–82; these read AFE and AVI. 85 to 86 is a (2S)-2-hydroxy-3-oxobutyl phosphate binding site; that stretch reads AT. The active-site Proton donor is the His-88. Residue Phe-113 participates in 5-amino-6-(D-ribitylamino)uracil binding. Arg-127 provides a ligand contact to (2S)-2-hydroxy-3-oxobutyl phosphate.

It belongs to the DMRL synthase family. As to quaternary structure, forms an icosahedral capsid composed of 60 subunits, arranged as a dodecamer of pentamers.

The enzyme catalyses (2S)-2-hydroxy-3-oxobutyl phosphate + 5-amino-6-(D-ribitylamino)uracil = 6,7-dimethyl-8-(1-D-ribityl)lumazine + phosphate + 2 H2O + H(+). It functions in the pathway cofactor biosynthesis; riboflavin biosynthesis; riboflavin from 2-hydroxy-3-oxobutyl phosphate and 5-amino-6-(D-ribitylamino)uracil: step 1/2. Its function is as follows. Catalyzes the formation of 6,7-dimethyl-8-ribityllumazine by condensation of 5-amino-6-(D-ribitylamino)uracil with 3,4-dihydroxy-2-butanone 4-phosphate. This is the penultimate step in the biosynthesis of riboflavin. The polypeptide is 6,7-dimethyl-8-ribityllumazine synthase (Geobacillus sp. (strain WCH70)).